A 197-amino-acid chain; its full sequence is Probable nicotinate-nucleotide adenylyltransferase (197 aa).

It belongs to the NadD family.

It catalyses the reaction nicotinate beta-D-ribonucleotide + ATP + H(+) = deamido-NAD(+) + diphosphate. It participates in cofactor biosynthesis; NAD(+) biosynthesis; deamido-NAD(+) from nicotinate D-ribonucleotide: step 1/1. In terms of biological role, catalyzes the reversible adenylation of nicotinate mononucleotide (NaMN) to nicotinic acid adenine dinucleotide (NaAD). The chain is Probable nicotinate-nucleotide adenylyltransferase from Pseudothermotoga lettingae (strain ATCC BAA-301 / DSM 14385 / NBRC 107922 / TMO) (Thermotoga lettingae).